We begin with the raw amino-acid sequence, 124 residues long: Small ribosomal subunit protein uS12 (124 aa).

Residues 9–28 (RTERQTLSRKTKSPALRSCP) are disordered. Asp89 is subject to 3-methylthioaspartic acid. Residues 104–124 (TAGVKDRRQSRSKYGAKAPKE) form a disordered region.

Belongs to the universal ribosomal protein uS12 family. As to quaternary structure, part of the 30S ribosomal subunit. Contacts proteins S8 and S17. May interact with IF1 in the 30S initiation complex.

With S4 and S5 plays an important role in translational accuracy. Its function is as follows. Interacts with and stabilizes bases of the 16S rRNA that are involved in tRNA selection in the A site and with the mRNA backbone. Located at the interface of the 30S and 50S subunits, it traverses the body of the 30S subunit contacting proteins on the other side and probably holding the rRNA structure together. The combined cluster of proteins S8, S12 and S17 appears to hold together the shoulder and platform of the 30S subunit. This Synechococcus sp. (strain RCC307) protein is Small ribosomal subunit protein uS12.